Here is a 61-residue protein sequence, read N- to C-terminus: Large ribosomal subunit protein uL29 (61 aa).

The protein belongs to the universal ribosomal protein uL29 family.

This chain is Large ribosomal subunit protein uL29, found in Xanthomonas campestris pv. campestris (strain 8004).